The following is a 379-amino-acid chain: Sperm microtubule associated protein 2 (379 aa).

The tract at residues 1–82 is disordered; the sequence is MGDSRRRSLG…EFPETLDPKE (82 aa). 2 stretches are compositionally biased toward basic and acidic residues: residues 19–29 and 38–50; these read GRSEREQDGDP and ESRR…RQDL. Over residues 56–76 the composition is skewed to acidic residues; it reads GPEDPEEELPPEEVAGEEFPE. 6 THEG repeats span residues 118-137, 184-203, 222-241, 258-277, 290-309, and 326-345; these read KARK…PKIN, TITV…PKRF, SSLE…PKIR, AAQM…PKAP, PKPH…PKAQ, and VTKK…PKVR. Residue Ser-295 is modified to Phosphoserine. A disordered region spans residues 344 to 379; sequence VRKGLNEGYDRRPLASMSLPPPKASPEKCDQPRPGL. 2 stretches are compositionally biased toward basic and acidic residues: residues 347–356 and 368–379; these read GLNEGYDRRP and SPEKCDQPRPGL.

In terms of assembly, interacts with CCT5. Testis specific.

It localises to the nucleus. In terms of biological role, may be involved (but not essential) in spermatogenesis. The polypeptide is Sperm microtubule associated protein 2 (Homo sapiens (Human)).